A 468-amino-acid chain; its full sequence is 3-isopropylmalate dehydratase large subunit (468 aa).

C347, C408, and C411 together coordinate [4Fe-4S] cluster.

Belongs to the aconitase/IPM isomerase family. LeuC type 1 subfamily. In terms of assembly, heterodimer of LeuC and LeuD. Requires [4Fe-4S] cluster as cofactor.

It catalyses the reaction (2R,3S)-3-isopropylmalate = (2S)-2-isopropylmalate. It functions in the pathway amino-acid biosynthesis; L-leucine biosynthesis; L-leucine from 3-methyl-2-oxobutanoate: step 2/4. In terms of biological role, catalyzes the isomerization between 2-isopropylmalate and 3-isopropylmalate, via the formation of 2-isopropylmaleate. The protein is 3-isopropylmalate dehydratase large subunit of Janthinobacterium sp. (strain Marseille) (Minibacterium massiliensis).